The following is a 218-amino-acid chain: Ribonuclease T (218 aa).

An Exonuclease domain is found at 20 to 194; sequence VVIDVETAGF…YDAERTAELF (175 aa). Residues Asp23, Glu25, His181, and Asp186 each coordinate Mg(2+). His181 acts as the Proton donor/acceptor in catalysis.

It belongs to the RNase T family. As to quaternary structure, homodimer. Mg(2+) is required as a cofactor.

Trims short 3' overhangs of a variety of RNA species, leaving a one or two nucleotide 3' overhang. Responsible for the end-turnover of tRNA: specifically removes the terminal AMP residue from uncharged tRNA (tRNA-C-C-A). Also appears to be involved in tRNA biosynthesis. The sequence is that of Ribonuclease T from Baumannia cicadellinicola subsp. Homalodisca coagulata.